The following is a 430-amino-acid chain: DNA repair protein recA homolog 3, mitochondrial (430 aa).

Residues Met-1–Phe-35 constitute a mitochondrion transit peptide. Gly-119–Thr-126 provides a ligand contact to ATP. The segment at Asp-385–Ser-415 is disordered.

Belongs to the RecA family.

The protein resides in the mitochondrion. In terms of biological role, involved in recombination ability and DNA strand transfer activity. In Arabidopsis thaliana (Mouse-ear cress), this protein is DNA repair protein recA homolog 3, mitochondrial.